A 455-amino-acid chain; its full sequence is Bifunctional protein GlmU (455 aa).

The interval 1–229 is pyrophosphorylase; sequence MSKKVMSVVI…LNEIEGINDG (229 aa). UDP-N-acetyl-alpha-D-glucosamine is bound by residues 11–14, K25, Q76, 81–82, 103–105, G140, E154, N169, and N227; these read LAAG, GT, and YGD. Position 105 (D105) interacts with Mg(2+). N227 lines the Mg(2+) pocket. Residues 230–250 are linker; that stretch reads LQLARLERLFQKQQAEKLLLS. Residues 251 to 455 form an N-acetyltransferase region; it reads GVRILDPARF…IQGWKRPKKT (205 aa). Residues R333 and K351 each contribute to the UDP-N-acetyl-alpha-D-glucosamine site. Catalysis depends on H363, which acts as the Proton acceptor. UDP-N-acetyl-alpha-D-glucosamine-binding residues include Y366 and N377. Acetyl-CoA is bound by residues A380, 386-387, S405, A423, and R440; that span reads NY.

It in the N-terminal section; belongs to the N-acetylglucosamine-1-phosphate uridyltransferase family. This sequence in the C-terminal section; belongs to the transferase hexapeptide repeat family. As to quaternary structure, homotrimer. Requires Mg(2+) as cofactor.

The protein localises to the cytoplasm. It catalyses the reaction alpha-D-glucosamine 1-phosphate + acetyl-CoA = N-acetyl-alpha-D-glucosamine 1-phosphate + CoA + H(+). The catalysed reaction is N-acetyl-alpha-D-glucosamine 1-phosphate + UTP + H(+) = UDP-N-acetyl-alpha-D-glucosamine + diphosphate. The protein operates within nucleotide-sugar biosynthesis; UDP-N-acetyl-alpha-D-glucosamine biosynthesis; N-acetyl-alpha-D-glucosamine 1-phosphate from alpha-D-glucosamine 6-phosphate (route II): step 2/2. It functions in the pathway nucleotide-sugar biosynthesis; UDP-N-acetyl-alpha-D-glucosamine biosynthesis; UDP-N-acetyl-alpha-D-glucosamine from N-acetyl-alpha-D-glucosamine 1-phosphate: step 1/1. Its pathway is bacterial outer membrane biogenesis; LPS lipid A biosynthesis. Catalyzes the last two sequential reactions in the de novo biosynthetic pathway for UDP-N-acetylglucosamine (UDP-GlcNAc). The C-terminal domain catalyzes the transfer of acetyl group from acetyl coenzyme A to glucosamine-1-phosphate (GlcN-1-P) to produce N-acetylglucosamine-1-phosphate (GlcNAc-1-P), which is converted into UDP-GlcNAc by the transfer of uridine 5-monophosphate (from uridine 5-triphosphate), a reaction catalyzed by the N-terminal domain. This is Bifunctional protein GlmU from Hamiltonella defensa subsp. Acyrthosiphon pisum (strain 5AT).